A 287-amino-acid chain; its full sequence is ATP synthase gamma chain (287 aa).

Belongs to the ATPase gamma chain family. F-type ATPases have 2 components, CF(1) - the catalytic core - and CF(0) - the membrane proton channel. CF(1) has five subunits: alpha(3), beta(3), gamma(1), delta(1), epsilon(1). CF(0) has three main subunits: a, b and c.

It is found in the cell inner membrane. In terms of biological role, produces ATP from ADP in the presence of a proton gradient across the membrane. The gamma chain is believed to be important in regulating ATPase activity and the flow of protons through the CF(0) complex. The protein is ATP synthase gamma chain of Shigella sonnei (strain Ss046).